The chain runs to 431 residues: Na(+)-translocating NADH-quinone reductase subunit F (431 aa).

The helical transmembrane segment at 10–30 threads the bilayer; it reads IFVASAAFCSLGLILVAVILL. The 2Fe-2S ferredoxin-type domain occupies 41–133; sequence CKLKINNDDS…DLCLEVEERY (93 aa). 4 residues coordinate [2Fe-2S] cluster: Cys76, Cys82, Cys85, and Cys117. The region spanning 136 to 286 is the FAD-binding FR-type domain; sequence ASSWEGTVVS…SGPYGESFMK (151 aa).

Belongs to the NqrF family. Composed of six subunits; NqrA, NqrB, NqrC, NqrD, NqrE and NqrF. It depends on [2Fe-2S] cluster as a cofactor. Requires FAD as cofactor.

The protein resides in the cell inner membrane. The catalysed reaction is a ubiquinone + n Na(+)(in) + NADH + H(+) = a ubiquinol + n Na(+)(out) + NAD(+). In terms of biological role, NQR complex catalyzes the reduction of ubiquinone-1 to ubiquinol by two successive reactions, coupled with the transport of Na(+) ions from the cytoplasm to the periplasm. The first step is catalyzed by NqrF, which accepts electrons from NADH and reduces ubiquinone-1 to ubisemiquinone by a one-electron transfer pathway. This is Na(+)-translocating NADH-quinone reductase subunit F from Chlamydia trachomatis serovar A (strain ATCC VR-571B / DSM 19440 / HAR-13).